Consider the following 1071-residue polypeptide: DNA-directed RNA polymerase subunit beta (1071 aa).

Belongs to the RNA polymerase beta chain family. In terms of assembly, in plastids the minimal PEP RNA polymerase catalytic core is composed of four subunits: alpha, beta, beta', and beta''. When a (nuclear-encoded) sigma factor is associated with the core the holoenzyme is formed, which can initiate transcription.

The protein resides in the plastid. The protein localises to the chloroplast. It carries out the reaction RNA(n) + a ribonucleoside 5'-triphosphate = RNA(n+1) + diphosphate. DNA-dependent RNA polymerase catalyzes the transcription of DNA into RNA using the four ribonucleoside triphosphates as substrates. The protein is DNA-directed RNA polymerase subunit beta of Adiantum capillus-veneris (Maidenhair fern).